A 334-amino-acid polypeptide reads, in one-letter code: DNA-directed RNA polymerase subunit alpha (334 aa).

The interval 1–232 is alpha N-terminal domain (alpha-NTD); that stretch reads MVREEIAVST…IDLFIPFLHA (232 aa). Residues 268 to 334 are alpha C-terminal domain (alpha-CTD); the sequence is GIALKCIFID…ILQKHFTIDC (67 aa).

It belongs to the RNA polymerase alpha chain family. In plastids the minimal PEP RNA polymerase catalytic core is composed of four subunits: alpha, beta, beta', and beta''. When a (nuclear-encoded) sigma factor is associated with the core the holoenzyme is formed, which can initiate transcription.

Its subcellular location is the plastid. It localises to the chloroplast. The catalysed reaction is RNA(n) + a ribonucleoside 5'-triphosphate = RNA(n+1) + diphosphate. Functionally, DNA-dependent RNA polymerase catalyzes the transcription of DNA into RNA using the four ribonucleoside triphosphates as substrates. In Chloranthus spicatus (Chulantree), this protein is DNA-directed RNA polymerase subunit alpha.